The chain runs to 142 residues: Metallothiol transferase FosB (142 aa).

The 116-residue stretch at 5–120 (SVNHICFSVS…DGHKIELHTG (116 aa)) folds into the VOC domain. The Mg(2+) site is built by H8, H67, and E116. E116 serves as the catalytic Proton donor/acceptor.

Belongs to the fosfomycin resistance protein family. FosB subfamily. As to quaternary structure, homodimer. The cofactor is Mg(2+).

Its subcellular location is the cytoplasm. Metallothiol transferase which confers resistance to fosfomycin by catalyzing the addition of a thiol cofactor to fosfomycin. L-cysteine is probably the physiological thiol donor. The sequence is that of Metallothiol transferase FosB from Staphylococcus epidermidis (strain ATCC 12228 / FDA PCI 1200).